The chain runs to 90 residues: UPF0367 protein SYNPCC7002_A0153 (90 aa).

The protein belongs to the UPF0367 family.

The polypeptide is UPF0367 protein SYNPCC7002_A0153 (Picosynechococcus sp. (strain ATCC 27264 / PCC 7002 / PR-6) (Agmenellum quadruplicatum)).